Here is a 103-residue protein sequence, read N- to C-terminus: Large ribosomal subunit protein bL21 (103 aa).

The protein belongs to the bacterial ribosomal protein bL21 family. Part of the 50S ribosomal subunit. Contacts protein L20.

In terms of biological role, this protein binds to 23S rRNA in the presence of protein L20. This is Large ribosomal subunit protein bL21 from Aeromonas hydrophila subsp. hydrophila (strain ATCC 7966 / DSM 30187 / BCRC 13018 / CCUG 14551 / JCM 1027 / KCTC 2358 / NCIMB 9240 / NCTC 8049).